A 302-amino-acid chain; its full sequence is Phospho-N-acetylmuramoyl-pentapeptide-transferase (302 aa).

Transmembrane regions (helical) follow at residues 1 to 21 (MIAANFLLNLFLYPILIKLFR), 42 to 62 (GTPTMGGILFVLTGFLFGMIS), 67 to 87 (MVLLGMFLFFLIGFLDDFLSV), 95 to 115 (LKTYQKALLQTLAAFIMLLLI), 123 to 143 (FFGSTIEMGKWYYLFALLVIV), 154 to 174 (GLDGLAGWIYVSGSIPYWFFL), 178 to 198 (GVSEDILLILGVGVLAFLVFN), 204 to 224 (IFMGDTGSITLGGVLGTVSVL), 229 to 249 (FYLVLFFMIPVIETLSVILQV), and 279 to 299 (IVAVFTVFNLISSLVALEIFG).

Belongs to the glycosyltransferase 4 family. MraY subfamily. It depends on Mg(2+) as a cofactor.

It is found in the cell inner membrane. The catalysed reaction is UDP-N-acetyl-alpha-D-muramoyl-L-alanyl-gamma-D-glutamyl-meso-2,6-diaminopimeloyl-D-alanyl-D-alanine + di-trans,octa-cis-undecaprenyl phosphate = di-trans,octa-cis-undecaprenyl diphospho-N-acetyl-alpha-D-muramoyl-L-alanyl-D-glutamyl-meso-2,6-diaminopimeloyl-D-alanyl-D-alanine + UMP. It participates in cell wall biogenesis; peptidoglycan biosynthesis. Its function is as follows. Catalyzes the initial step of the lipid cycle reactions in the biosynthesis of the cell wall peptidoglycan: transfers peptidoglycan precursor phospho-MurNAc-pentapeptide from UDP-MurNAc-pentapeptide onto the lipid carrier undecaprenyl phosphate, yielding undecaprenyl-pyrophosphoryl-MurNAc-pentapeptide, known as lipid I. This is Phospho-N-acetylmuramoyl-pentapeptide-transferase from Thermotoga maritima (strain ATCC 43589 / DSM 3109 / JCM 10099 / NBRC 100826 / MSB8).